The chain runs to 383 residues: S-adenosylmethionine synthase (383 aa).

An ATP-binding site is contributed by His-15. Asp-17 lines the Mg(2+) pocket. Residue Glu-43 coordinates K(+). The L-methionine site is built by Glu-56 and Gln-99. Positions 99 to 109 are flexible loop; sequence QSPDINQGVDR. ATP-binding positions include 164–166, 230–231, Asp-239, 245–246, Ala-262, and Lys-266; these read DAK, RF, and RK. Asp-239 is an L-methionine binding site. Lys-270 contributes to the L-methionine binding site.

Belongs to the AdoMet synthase family. In terms of assembly, homotetramer; dimer of dimers. Mg(2+) is required as a cofactor. The cofactor is K(+).

The protein localises to the cytoplasm. It catalyses the reaction L-methionine + ATP + H2O = S-adenosyl-L-methionine + phosphate + diphosphate. It participates in amino-acid biosynthesis; S-adenosyl-L-methionine biosynthesis; S-adenosyl-L-methionine from L-methionine: step 1/1. Catalyzes the formation of S-adenosylmethionine (AdoMet) from methionine and ATP. The overall synthetic reaction is composed of two sequential steps, AdoMet formation and the subsequent tripolyphosphate hydrolysis which occurs prior to release of AdoMet from the enzyme. The chain is S-adenosylmethionine synthase from Actinobacillus pleuropneumoniae serotype 7 (strain AP76).